Reading from the N-terminus, the 563-residue chain is Inorganic phosphate transporter PT2 (563 aa).

Disordered stretches follow at residues 1-51 (MAPR…SGEE) and 67-96 (DGGA…PAYS). The Extracellular portion of the chain corresponds to 1–127 (MAPRYHSAAE…NGEKQSLLVP (127 aa)). The helical transmembrane segment at 128-148 (CLAVFSSNYNFTVTSIALFLM) threads the bilayer. The Cytoplasmic segment spans residues 149 to 168 (NQDPLYKDASDTVVGSSTVK). The helical transmembrane segment at 169 to 189 (MLSYAGAIVGMCTMGYLGDLI) threads the bilayer. At 190-192 (GRR) the chain is on the extracellular side. Residues 193–213 (LAMILTLALVFIGALLSSICA) form a helical membrane-spanning segment. Residues 214 to 217 (WGDG) lie on the Cytoplasmic side of the membrane. Residues 218–238 (VTVLVIMGVCRFVLGVGSGGV) traverse the membrane as a helical segment. Residues 239-263 (YPLSAVSAAEGAGSEKSNDRSMRVS) are Extracellular-facing. A helical transmembrane segment spans residues 264–284 (WAYSMNVPGIMFPYIVALVLW). The Cytoplasmic segment spans residues 285–291 (CTTHNVD). The chain crosses the membrane as a helical span at residues 292–312 (VCFRILLGFGALPALLIWLPA). The Extracellular portion of the chain corresponds to 313-342 (WRMKEDRAYVAKDFAKHLAGVFVSRSYWRQ). The helical transmembrane segment at 343-363 (LLGTGVCWLLYDVTAYGILLV) threads the bilayer. The Cytoplasmic segment spans residues 364-380 (QPEITQSIWGNSSSVTD). Residues 381–401 (VIWQNIILNGMGIPGCFMGIL) traverse the membrane as a helical segment. At 402–412 (VLKQMGVKWLQ) the chain is on the extracellular side. Residues 413–433 (FWGFVGLAVSAFLMAATVEIL) traverse the membrane as a helical segment. At 434 to 440 (QGKAWAQ) the chain is on the cytoplasmic side. Residues 441–461 (LVLLCIVNFFINWGASITTFI) traverse the membrane as a helical segment. The Extracellular portion of the chain corresponds to 462–477 (LPSLVFPPEVRSTYSG). A helical membrane pass occupies residues 478-498 (ISAALGKIGAVGGIYTMKAIL). Topologically, residues 499-504 (STGGLT) are cytoplasmic. Residues 505-525 (PMMICAGVPSLAAAILTWFYV) form a helical membrane-spanning segment. The Extracellular portion of the chain corresponds to 526–563 (DPVPNTLRSSFLQCFGSLAGSCPFIDCRKFRRGSRAFE).

The protein belongs to the major facilitator superfamily. Phosphate:H(+) symporter (TC 2.A.1.9) family.

It is found in the cell membrane. It carries out the reaction phosphate(in) = phosphate(out). In terms of biological role, inorganic phosphate transporter. Activity is likely sodium-independent. Exhibits higher activity under acidic pH, implying that either the monovalent form of phosphate is the preferred substrate or the transport activity is H(+)-dependent. In Toxoplasma gondii (strain ATCC 50861 / VEG), this protein is Inorganic phosphate transporter PT2.